Reading from the N-terminus, the 421-residue chain is NAD-specific glutamate dehydrogenase (421 aa).

Lys71 and Lys95 together coordinate substrate. Lys107 serves as the catalytic Proton donor. Thr191 and Asn222 together coordinate NAD(+). Ser355 serves as a coordination point for substrate.

This sequence belongs to the Glu/Leu/Phe/Val dehydrogenases family. In terms of assembly, homohexamer.

It carries out the reaction L-glutamate + NAD(+) + H2O = 2-oxoglutarate + NH4(+) + NADH + H(+). The protein is NAD-specific glutamate dehydrogenase (gluD) of Clostridioides difficile (Peptoclostridium difficile).